A 195-amino-acid polypeptide reads, in one-letter code: HTH-type transcriptional regulator BetI (195 aa).

The HTH tetR-type domain maps to 8-68 (SIRRRQLIDA…ATMRDITSQL (61 aa)). The segment at residues 31–50 (TIAQIARRAGVSTGIISHYF) is a DNA-binding region (H-T-H motif).

The protein operates within amine and polyamine biosynthesis; betaine biosynthesis via choline pathway [regulation]. Repressor involved in the biosynthesis of the osmoprotectant glycine betaine. It represses transcription of the choline transporter BetT and the genes of BetAB involved in the synthesis of glycine betaine. The sequence is that of HTH-type transcriptional regulator BetI from Escherichia coli O17:K52:H18 (strain UMN026 / ExPEC).